Reading from the N-terminus, the 108-residue chain is Zinc finger protein 475 (108 aa).

C2HC/C3H-type zinc fingers lie at residues 6-35 (PAVV…KWHN) and 79-108 (QLVP…KAAK). The Zn(2+) site is built by C10, C13, H25, C29, C83, C86, H98, and C102.

Zn(2+) is required as a cofactor.

The polypeptide is Zinc finger protein 475 (Homo sapiens (Human)).